A 277-amino-acid polypeptide reads, in one-letter code: Large ribosomal subunit protein uL2 (277 aa).

The interval 212 to 277 (RWRGKRPHVR…KFIVRGRKSK (66 aa)) is disordered. Positions 254–277 (TAGKKTRDKKKASTKFIVRGRKSK) are enriched in basic residues.

This sequence belongs to the universal ribosomal protein uL2 family. Part of the 50S ribosomal subunit. Forms a bridge to the 30S subunit in the 70S ribosome.

Functionally, one of the primary rRNA binding proteins. Required for association of the 30S and 50S subunits to form the 70S ribosome, for tRNA binding and peptide bond formation. It has been suggested to have peptidyltransferase activity; this is somewhat controversial. Makes several contacts with the 16S rRNA in the 70S ribosome. This is Large ribosomal subunit protein uL2 from Leuconostoc mesenteroides subsp. mesenteroides (strain ATCC 8293 / DSM 20343 / BCRC 11652 / CCM 1803 / JCM 6124 / NCDO 523 / NBRC 100496 / NCIMB 8023 / NCTC 12954 / NRRL B-1118 / 37Y).